The primary structure comprises 197 residues: Protocatechuate 3,4-dioxygenase alpha chain (197 aa).

Arg-130 provides a ligand contact to 3,4-dihydroxybenzoate.

Belongs to the intradiol ring-cleavage dioxygenase family. In terms of assembly, the enzyme is an oligomer of 12 copies of the alpha and beta chains. The cofactor is Fe(3+).

It carries out the reaction 3,4-dihydroxybenzoate + O2 = 3-carboxy-cis,cis-muconate + 2 H(+). The protein operates within aromatic compound metabolism; beta-ketoadipate pathway; 3-carboxy-cis,cis-muconate from 3,4-dihydroxybenzoate: step 1/1. In terms of biological role, plays an essential role in the utilization of numerous aromatic and hydroaromatic compounds via the beta-ketoadipate pathway. This Burkholderia cepacia (Pseudomonas cepacia) protein is Protocatechuate 3,4-dioxygenase alpha chain (pcaG).